Here is a 475-residue protein sequence, read N- to C-terminus: Aspartyl/glutamyl-tRNA(Asn/Gln) amidotransferase subunit B (475 aa).

It belongs to the GatB/GatE family. GatB subfamily. Heterotrimer of A, B and C subunits.

The enzyme catalyses L-glutamyl-tRNA(Gln) + L-glutamine + ATP + H2O = L-glutaminyl-tRNA(Gln) + L-glutamate + ADP + phosphate + H(+). It catalyses the reaction L-aspartyl-tRNA(Asn) + L-glutamine + ATP + H2O = L-asparaginyl-tRNA(Asn) + L-glutamate + ADP + phosphate + 2 H(+). Functionally, allows the formation of correctly charged Asn-tRNA(Asn) or Gln-tRNA(Gln) through the transamidation of misacylated Asp-tRNA(Asn) or Glu-tRNA(Gln) in organisms which lack either or both of asparaginyl-tRNA or glutaminyl-tRNA synthetases. The reaction takes place in the presence of glutamine and ATP through an activated phospho-Asp-tRNA(Asn) or phospho-Glu-tRNA(Gln). The polypeptide is Aspartyl/glutamyl-tRNA(Asn/Gln) amidotransferase subunit B (Thiobacillus denitrificans (strain ATCC 25259 / T1)).